A 234-amino-acid polypeptide reads, in one-letter code: Proteasome subunit alpha (234 aa).

This sequence belongs to the peptidase T1A family. As to quaternary structure, the 20S proteasome core is composed of 14 alpha and 14 beta subunits that assemble into four stacked heptameric rings, resulting in a barrel-shaped structure. The two inner rings, each composed of seven catalytic beta subunits, are sandwiched by two outer rings, each composed of seven alpha subunits. The catalytic chamber with the active sites is on the inside of the barrel. Has a gated structure, the ends of the cylinder being occluded by the N-termini of the alpha-subunits. Is capped at one or both ends by the proteasome regulatory ATPase, PAN.

Its subcellular location is the cytoplasm. With respect to regulation, the formation of the proteasomal ATPase PAN-20S proteasome complex, via the docking of the C-termini of PAN into the intersubunit pockets in the alpha-rings, triggers opening of the gate for substrate entry. Interconversion between the open-gate and close-gate conformations leads to a dynamic regulation of the 20S proteasome proteolysis activity. Its function is as follows. Component of the proteasome core, a large protease complex with broad specificity involved in protein degradation. In Picrophilus torridus (strain ATCC 700027 / DSM 9790 / JCM 10055 / NBRC 100828 / KAW 2/3), this protein is Proteasome subunit alpha.